We begin with the raw amino-acid sequence, 473 residues long: Photosystem II CP43 reaction center protein (473 aa).

Positions 1 to 14 are excised as a propeptide; sequence MKTLYSLRRFYPVE. Thr-15 is subject to N-acetylthreonine. Phosphothreonine is present on Thr-15. 5 helical membrane-spanning segments follow: residues 69–93, 134–155, 178–200, 255–275, and 291–312; these read LFEVAHFVPEKPMYEQGLILLPHLA, LLGPETLEESFPFFGYVWKDRN, KALYFGGVYDTWAPGGGDVRKIT, KPFAWARRAFVWSGEAYLSYS, and WFNNTAYPSEFYGPTGPEASQA. Glu-367 contacts [CaMn4O5] cluster. A helical transmembrane segment spans residues 447-471; that stretch reads RARAAAAGFEKGIDRDFEPVLSMTP.

Belongs to the PsbB/PsbC family. PsbC subfamily. As to quaternary structure, PSII is composed of 1 copy each of membrane proteins PsbA, PsbB, PsbC, PsbD, PsbE, PsbF, PsbH, PsbI, PsbJ, PsbK, PsbL, PsbM, PsbT, PsbX, PsbY, PsbZ, Psb30/Ycf12, at least 3 peripheral proteins of the oxygen-evolving complex and a large number of cofactors. It forms dimeric complexes. Requires Binds multiple chlorophylls and provides some of the ligands for the Ca-4Mn-5O cluster of the oxygen-evolving complex. It may also provide a ligand for a Cl- that is required for oxygen evolution. PSII binds additional chlorophylls, carotenoids and specific lipids. as cofactor.

Its subcellular location is the plastid. The protein resides in the chloroplast thylakoid membrane. In terms of biological role, one of the components of the core complex of photosystem II (PSII). It binds chlorophyll and helps catalyze the primary light-induced photochemical processes of PSII. PSII is a light-driven water:plastoquinone oxidoreductase, using light energy to abstract electrons from H(2)O, generating O(2) and a proton gradient subsequently used for ATP formation. The protein is Photosystem II CP43 reaction center protein of Calycanthus floridus var. glaucus (Eastern sweetshrub).